Consider the following 74-residue polypeptide: UPF0741 protein BcerKBAB4_5177 (74 aa).

This sequence belongs to the UPF0741 family.

This Bacillus mycoides (strain KBAB4) (Bacillus weihenstephanensis) protein is UPF0741 protein BcerKBAB4_5177.